The primary structure comprises 442 residues: Tubby-related protein 3 (442 aa).

The interval 23 to 68 is required for association with the IFT complex A (IFT-A); sequence MRQAKLDYQRLLLEKRQRKKRLEPFMVQPNPEARLRRAKPRASDEQ. Residues 101–177 are disordered; that stretch reads PSVSSSVVEE…TSGSATAAQP (77 aa). A compositionally biased stretch (polar residues) spans 145-162; sequence GISQSACLERPNSASSQN. A compositionally biased stretch (low complexity) spans 163–175; that stretch reads STDTGTSGSATAA.

It belongs to the TUB family. In terms of assembly, associates with the IFT complex A (IFT-A). Interacts with SIRT1. Expressed at high levels in testis, ovaries, thyroid, and spinal cord.

The protein resides in the nucleus. The protein localises to the cell membrane. It localises to the cell projection. It is found in the cilium. Its subcellular location is the cytoplasm. The protein resides in the secreted. Negative regulator of the Shh signaling transduction pathway: recruited to primary cilia via association with the IFT complex A (IFT-A) and is required for recruitment of G protein-coupled receptor GPR161 to cilia, a promoter of PKA-dependent basal repression machinery in Shh signaling. Binds to phosphorylated inositide (phosphoinositide) lipids. Both IFT-A- and phosphoinositide-binding properties are required to regulate ciliary G protein-coupled receptor trafficking. During adipogenesis, regulates ciliary trafficking of FFAR4 in preadipocytes. This Homo sapiens (Human) protein is Tubby-related protein 3.